A 572-amino-acid polypeptide reads, in one-letter code: Nuclear hormone receptor family member nhr-25 (572 aa).

Residues 15–90 (GEMCPVCGDR…MGMKMEAVRA (76 aa)) constitute a DNA-binding region (nuclear receptor). NR C4-type zinc fingers lie at residues 18–38 (CPVC…CESC) and 54–78 (CSAE…FQKC). In terms of domain architecture, NR LBD spans 307 to 567 (PTEKTVDHFY…PTPQATYTAV (261 aa)).

It belongs to the nuclear hormone receptor family. As to quaternary structure, interacts with lin-39. Interacts with nob-1. In terms of tissue distribution, expressed in the epidermis, the developing somatic gonad, and a subset of other epithelial cells.

The protein resides in the nucleus. In terms of biological role, orphan nuclear receptor and probable transcription activator, required during development. Plays a role in male tail tip morphogenesis regulating the expression of the transcription factor dmd-3 in a negative feedback loop. Regulates vulval precursor cell (VPC) differentiation, in concert with homeobox protein lin-39. Involved in promoting embryogenesis, in concert with homeobox protein nob-1. May play a role in modulation of lifespan and immunity. This chain is Nuclear hormone receptor family member nhr-25, found in Caenorhabditis elegans.